The sequence spans 404 residues: Argininosuccinate synthase (404 aa).

ATP contacts are provided by residues 10-18 (AFSGGLDTS) and Ala-37. Residues Tyr-88 and Ser-93 each coordinate L-citrulline. Gly-118 contacts ATP. Residues Thr-120, Asn-124, and Asp-125 each coordinate L-aspartate. Asn-124 contacts L-citrulline. L-citrulline contacts are provided by Arg-128, Ser-179, Ser-188, Glu-264, and Tyr-276.

Belongs to the argininosuccinate synthase family. Type 1 subfamily. Homotetramer.

It localises to the cytoplasm. The enzyme catalyses L-citrulline + L-aspartate + ATP = 2-(N(omega)-L-arginino)succinate + AMP + diphosphate + H(+). It participates in amino-acid biosynthesis; L-arginine biosynthesis; L-arginine from L-ornithine and carbamoyl phosphate: step 2/3. The polypeptide is Argininosuccinate synthase (Nitrosomonas eutropha (strain DSM 101675 / C91 / Nm57)).